The following is a 234-amino-acid chain: Adenosine 5'-phosphosulfate reductase (234 aa).

4 residues coordinate [4Fe-4S] cluster: C120, C121, C203, and C206. The active-site Nucleophile; cysteine thiosulfonate intermediate is C229.

It belongs to the PAPS reductase family. CysH subfamily. It depends on [4Fe-4S] cluster as a cofactor.

It is found in the cytoplasm. It carries out the reaction [thioredoxin]-disulfide + sulfite + AMP + 2 H(+) = adenosine 5'-phosphosulfate + [thioredoxin]-dithiol. Its pathway is sulfur metabolism; hydrogen sulfide biosynthesis; sulfite from sulfate. Functionally, catalyzes the formation of sulfite from adenosine 5'-phosphosulfate (APS) using thioredoxin as an electron donor. The chain is Adenosine 5'-phosphosulfate reductase from Bacillus thuringiensis subsp. konkukian (strain 97-27).